The primary structure comprises 76 residues: uncharacterized protein (76 aa).

The signal sequence occupies residues 1 to 22 (MFTKALSVVLLTCALFSGQLMA).

This is an uncharacterized protein from Escherichia coli O157:H7.